Here is a 274-residue protein sequence, read N- to C-terminus: 5'-nucleotidase SurE (274 aa).

The a divalent metal cation site is built by Asp-12, Asp-13, Ser-45, and Asn-103.

The protein belongs to the SurE nucleotidase family. A divalent metal cation serves as cofactor.

It is found in the cytoplasm. The catalysed reaction is a ribonucleoside 5'-phosphate + H2O = a ribonucleoside + phosphate. Its function is as follows. Nucleotidase that shows phosphatase activity on nucleoside 5'-monophosphates. This Chlamydia felis (strain Fe/C-56) (Chlamydophila felis) protein is 5'-nucleotidase SurE.